The chain runs to 834 residues: Prominin-2 (834 aa).

Positions 1 to 26 (MKHTLALLAPLLGLGLGLALSQLAAG) are cleaved as a signal peptide. At 27-106 (ATDCKFLGPA…NEVVRYEAGY (80 aa)) the chain is on the extracellular side. Residues 107–127 (VVCAVIAGLYLLLVPTAGLCF) traverse the membrane as a helical segment. Residues 128–153 (CCCRCHRRCGGRVKTEHKALACERAA) are Cytoplasmic-facing. Residues 154–174 (LMVFLLLTTLLLLIGVVCAFV) form a helical membrane-spanning segment. Residues 175 to 426 (TNQRTHEQMG…EVQRYETYRW (252 aa)) lie on the Extracellular side of the membrane. N-linked (GlcNAc...) asparagine glycosylation is present at asparagine 270. A helical membrane pass occupies residues 427–447 (IVGCVLCSVVLFVVLCNLLGL). Residues 448–472 (NLGIWGLSARDDPSHPEAKGEAGAR) are Cytoplasmic-facing. The chain crosses the membrane as a helical span at residues 473 to 493 (FLMAGVGLSFLFAAPLILLVF). Residues 494 to 779 (ATFLVGGNVQ…LCDMMADPWN (286 aa)) lie on the Extracellular side of the membrane. Serine 727 is modified (phosphoserine). A helical transmembrane segment spans residues 780-800 (AFWFCLAWCTFFLIPSIIFAV). Topologically, residues 801–834 (KTSKYFRPIRKRLSSTSSEETQLFHIPRVTSLKL) are cytoplasmic. Serine 818 carries the phosphoserine modification.

This sequence belongs to the prominin family. As to quaternary structure, binds cholesterol. In terms of processing, glycosylated. Present in saliva within small membrane particles (at protein level). Expressed in kidney, prostate, trachea, esophagus, salivary gland, thyroid gland, mammary gland adrenal gland, placenta, stomach, spinal cord and liver. In submucosal tumor, expressed in spindle-shaped or stellate stromal cells. Expressed in prostate cancer cell lines.

It localises to the apical cell membrane. The protein localises to the basolateral cell membrane. The protein resides in the cell projection. Its subcellular location is the microvillus membrane. It is found in the cilium membrane. This is Prominin-2 (PROM2) from Homo sapiens (Human).